Reading from the N-terminus, the 286-residue chain is Nucleotide-binding protein HCH_05324 (286 aa).

Residue 8 to 15 (GRSGSGKS) coordinates ATP. 60–63 (DARN) provides a ligand contact to GTP.

Belongs to the RapZ-like family.

Its function is as follows. Displays ATPase and GTPase activities. The sequence is that of Nucleotide-binding protein HCH_05324 from Hahella chejuensis (strain KCTC 2396).